Here is a 340-residue protein sequence, read N- to C-terminus: Dihydroorotate dehydrogenase (quinone) (340 aa).

FMN is bound by residues 61–65 (AGLDK) and threonine 85. Lysine 65 contributes to the substrate binding site. 110–114 (NRMGF) contacts substrate. FMN contacts are provided by asparagine 138 and asparagine 171. Asparagine 171 serves as a coordination point for substrate. Residue serine 174 is the Nucleophile of the active site. Residue asparagine 176 coordinates substrate. FMN-binding residues include lysine 216 and threonine 244. A substrate-binding site is contributed by 245 to 246 (NT). Residues glycine 267, glycine 296, and 317–318 (YS) each bind FMN.

Belongs to the dihydroorotate dehydrogenase family. Type 2 subfamily. Monomer. FMN serves as cofactor.

Its subcellular location is the cell membrane. It catalyses the reaction (S)-dihydroorotate + a quinone = orotate + a quinol. The protein operates within pyrimidine metabolism; UMP biosynthesis via de novo pathway; orotate from (S)-dihydroorotate (quinone route): step 1/1. Functionally, catalyzes the conversion of dihydroorotate to orotate with quinone as electron acceptor. This chain is Dihydroorotate dehydrogenase (quinone), found in Pseudomonas putida (strain ATCC 47054 / DSM 6125 / CFBP 8728 / NCIMB 11950 / KT2440).